We begin with the raw amino-acid sequence, 490 residues long: Cytochrome P450 2C8 (490 aa).

Substrate is bound by residues Ser-100, Asn-204, and Arg-241. Residue Ser-100 is modified to Phosphoserine. Residue Cys-435 coordinates heme.

Belongs to the cytochrome P450 family. Heme serves as cofactor.

It is found in the endoplasmic reticulum membrane. It localises to the microsome membrane. The catalysed reaction is an organic molecule + reduced [NADPH--hemoprotein reductase] + O2 = an alcohol + oxidized [NADPH--hemoprotein reductase] + H2O + H(+). It catalyses the reaction (5Z,8Z,11Z,14Z)-eicosatetraenoate + reduced [NADPH--hemoprotein reductase] + O2 = (11R,12S)-epoxy-(5Z,8Z,14Z)-eicosatrienoate + oxidized [NADPH--hemoprotein reductase] + H2O + H(+). The enzyme catalyses (5Z,8Z,11Z,14Z)-eicosatetraenoate + reduced [NADPH--hemoprotein reductase] + O2 = (11S,12R)-epoxy-(5Z,8Z,14Z)-eicosatrienoate + oxidized [NADPH--hemoprotein reductase] + H2O + H(+). It carries out the reaction (5Z,8Z,11Z,14Z)-eicosatetraenoate + reduced [NADPH--hemoprotein reductase] + O2 = (14R,15S)-epoxy-(5Z,8Z,11Z)-eicosatrienoate + oxidized [NADPH--hemoprotein reductase] + H2O + H(+). The catalysed reaction is (5Z,8Z,11Z,14Z)-eicosatetraenoate + reduced [NADPH--hemoprotein reductase] + O2 = (14S,15R)-epoxy-(5Z,8Z,11Z)-eicosatrienoate + oxidized [NADPH--hemoprotein reductase] + H2O + H(+). It catalyses the reaction (5Z,8Z,11Z,14Z,17Z)-eicosapentaenoate + reduced [NADPH--hemoprotein reductase] + O2 = 11,12-epoxy-(5Z,8Z,14Z,17Z)-eicosatetraenoate + oxidized [NADPH--hemoprotein reductase] + H2O + H(+). The enzyme catalyses (5Z,8Z,11Z,14Z,17Z)-eicosapentaenoate + reduced [NADPH--hemoprotein reductase] + O2 = 14,15-epoxy-(5Z,8Z,11Z,17Z)-eicosatetraenoate + oxidized [NADPH--hemoprotein reductase] + H2O + H(+). It carries out the reaction (5Z,8Z,11Z,14Z,17Z)-eicosapentaenoate + reduced [NADPH--hemoprotein reductase] + O2 = (17R,18S)-epoxy-(5Z,8Z,11Z,14Z)-eicosatetraenoate + oxidized [NADPH--hemoprotein reductase] + H2O + H(+). The catalysed reaction is (5Z,8Z,11Z,14Z,17Z)-eicosapentaenoate + reduced [NADPH--hemoprotein reductase] + O2 = (17S,18R)-epoxy-(5Z,8Z,11Z,14Z)-eicosatetraenoate + oxidized [NADPH--hemoprotein reductase] + H2O + H(+). It catalyses the reaction (4Z,7Z,10Z,13Z,16Z,19Z)-docosahexaenoate + reduced [NADPH--hemoprotein reductase] + O2 = (19R,20S)-epoxy-(4Z,7Z,10Z,13Z,16Z)-docosapentaenoate + oxidized [NADPH--hemoprotein reductase] + H2O + H(+). The enzyme catalyses (4Z,7Z,10Z,13Z,16Z,19Z)-docosahexaenoate + reduced [NADPH--hemoprotein reductase] + O2 = (19S,20R)-epoxy-(4Z,7Z,10Z,13Z,16Z)-docosapentaenoate + oxidized [NADPH--hemoprotein reductase] + H2O + H(+). It carries out the reaction all-trans-retinoate + reduced [NADPH--hemoprotein reductase] + O2 = all-trans-4-hydroxyretinoate + oxidized [NADPH--hemoprotein reductase] + H2O + H(+). The catalysed reaction is 17beta-estradiol + reduced [NADPH--hemoprotein reductase] + O2 = 16alpha,17beta-estriol + oxidized [NADPH--hemoprotein reductase] + H2O + H(+). It catalyses the reaction estrone + reduced [NADPH--hemoprotein reductase] + O2 = 16alpha-hydroxyestrone + oxidized [NADPH--hemoprotein reductase] + H2O + H(+). Its pathway is steroid metabolism. The protein operates within lipid metabolism; arachidonate metabolism. It functions in the pathway cofactor metabolism; retinol metabolism. Its function is as follows. A cytochrome P450 monooxygenase involved in the metabolism of various endogenous substrates, including fatty acids, steroid hormones and vitamins. Mechanistically, uses molecular oxygen inserting one oxygen atom into a substrate, and reducing the second into a water molecule, with two electrons provided by NADPH via cytochrome P450 reductase (NADPH--hemoprotein reductase). Primarily catalyzes the epoxidation of double bonds of polyunsaturated fatty acids (PUFA) with a preference for the last double bond. Catalyzes the hydroxylation of carbon-hydrogen bonds. Metabolizes all trans-retinoic acid toward its 4-hydroxylated form. Displays 16-alpha hydroxylase activity toward estrogen steroid hormones, 17beta-estradiol (E2) and estrone (E1). Plays a role in the oxidative metabolism of xenobiotics. It is the principal enzyme responsible for the metabolism of the anti-cancer drug paclitaxel (taxol). In Homo sapiens (Human), this protein is Cytochrome P450 2C8.